The following is a 181-amino-acid chain: Reverse rubrerythrin-1 (181 aa).

In terms of domain architecture, Rubredoxin-like spans 1–35 (MKKFKCVVCGYIYTGEDAPEKCPVCGAGKDKFVEV). Fe cation-binding residues include Cys6, Cys9, Cys22, Cys25, Glu69, Glu102, Glu132, Glu165, and His168. One can recognise a Ferritin-like diiron domain in the interval 52–181 (KGVDKEVLEG…FRGLLNRYFK (130 aa)).

As to quaternary structure, homodimer. Fe(3+) is required as a cofactor.

It carries out the reaction H2O2 + NADH + H(+) = NAD(+) + 2 H2O. Functions as the terminal component of an NADH peroxidase (NADH:H(2)O(2) oxidoreductase) when using NADH:rubredoxin oxidoreductase (NROR) and rubredoxin (Rd) as electron transport intermediaries from NADH to revRbr 1. Plays an important role in the oxidative stress defense system in C.acetobutylicum, an obligate anaerobic bacterium. Also exhibits NADH oxidase (NADH:O(2) oxidoreductase) activity in vitro, which is 100-fold lesser than that of FprA1/2 using the same electron transfer components. Therefore, its predominant function is most likely as a scavenger of its preferred substrate, H(2)O(2). The sequence is that of Reverse rubrerythrin-1 (rbr3A) from Clostridium acetobutylicum (strain ATCC 824 / DSM 792 / JCM 1419 / IAM 19013 / LMG 5710 / NBRC 13948 / NRRL B-527 / VKM B-1787 / 2291 / W).